The sequence spans 89 residues: MEIPKLLYIAVIAIGLSGSLTCATPLANPWADPEAEANPEAKAIAEATAEAIAEALAEPEPALPALPLLAFLFSLPAVQHWIEKNWING.

The first 23 residues, 1-23 (MEIPKLLYIAVIAIGLSGSLTCA), serve as a signal peptide directing secretion. Residues 24-61 (TPLANPWADPEAEANPEAKAIAEATAEAIAEALAEPEP) constitute a propeptide that is removed on maturation. N88 is modified (asparagine amide).

This sequence belongs to the formicidae venom clade 1 family. In terms of tissue distribution, expressed by the venom gland.

Its subcellular location is the secreted. Its function is as follows. Vertebrate-selective toxin that causes pain by targeting voltage-gated sodium channels. The sequence is that of Myrmicitoxin(1)-Pr2a from Pogonomyrmex rugosus (Desert harvester ant).